The sequence spans 270 residues: Regulatory protein RecX (270 aa).

This sequence belongs to the RecX family.

It localises to the cytoplasm. Modulates RecA activity. The chain is Regulatory protein RecX from Bacillus thuringiensis subsp. konkukian (strain 97-27).